We begin with the raw amino-acid sequence, 295 residues long: Small ribosomal subunit protein uS2 (295 aa).

N-acetylserine is present on Ser-2. Ser-43 carries the phosphoserine modification. An N6-acetyllysine modification is found at Lys-52. An interaction with PPP1R16B region spans residues 54–113 (TWEKLLLAARAIVAIENPADVSVISSRNTGQRAVLKFAAATGATPIAGRFTPGTFTNQIQ). N6-acetyllysine; alternate is present on Lys-89. A Glycyl lysine isopeptide (Lys-Gly) (interchain with G-Cter in SUMO2); alternate cross-link involves residue Lys-89. Thr-97 bears the Phosphothreonine mark. 2 laminin-binding regions span residues 161–180 (IPCNNKGAHSVGLMWWMLAR) and 205–229 (RDPEEIEKEEQAAAEKAVTKEEFQG). The segment covering 214–227 (EQAAAEKAVTKEEF) has biased composition (basic and acidic residues). The disordered stretch occupies residues 214–240 (EQAAAEKAVTKEEFQGEWTAPAPEFTA). [DE]-W-[ST] repeat units follow at residues 230 to 232 (EWT), 247 to 249 (DWS), 266 to 268 (DWS), and 275 to 277 (DWS). Positions 242–295 (QPEVADWSEGVQVPSVPIQQFPTEDWSARPFTEDWSAAPTAQATEWVGTTSELS) are laminin-binding. Positions 263–295 (PTEDWSARPFTEDWSAAPTAQATEWVGTTSELS) are disordered. The span at 280 to 295 (PTAQATEWVGTTSELS) shows a compositional bias: polar residues.

It belongs to the universal ribosomal protein uS2 family. In terms of assembly, monomer (37LRP) and homodimer (67LR). Component of the small ribosomal subunit. Mature ribosomes consist of a small (40S) and a large (60S) subunit. The 40S subunit contains about 33 different proteins and 1 molecule of RNA (18S). The 60S subunit contains about 49 different proteins and 3 molecules of RNA (28S, 5.8S and 5S). Interacts with RPS21. Interacts with several laminins including at least LAMB1. Interacts with MDK. The mature dimeric form interacts with PPP1R16B (via its fourth ankyrin repeat). Interacts with PPP1CA only in the presence of PPP1R16B. Acylated. Acylation may be a prerequisite for conversion of the monomeric 37 kDa laminin receptor precursor (37LRP) to the mature dimeric 67 kDa laminin receptor (67LR), and may provide a mechanism for membrane association. In terms of processing, cleaved by stromelysin-3 (ST3) at the cell surface. Cleavage by stromelysin-3 may be a mechanism to alter cell-extracellular matrix interactions.

It is found in the cell membrane. Its subcellular location is the cytoplasm. The protein localises to the nucleus. In terms of biological role, required for the assembly and/or stability of the 40S ribosomal subunit. Required for the processing of the 20S rRNA-precursor to mature 18S rRNA in a late step of the maturation of 40S ribosomal subunits. Also functions as a cell surface receptor for laminin. Plays a role in cell adhesion to the basement membrane and in the consequent activation of signaling transduction pathways. May play a role in cell fate determination and tissue morphogenesis. Also acts as a receptor for several other ligands, including the pathogenic prion protein, viruses, and bacteria. Acts as a PPP1R16B-dependent substrate of PPP1CA. The sequence is that of Small ribosomal subunit protein uS2 from Ovis aries (Sheep).